Here is a 681-residue protein sequence, read N- to C-terminus: PTS system glucose-specific EIICBA component (681 aa).

One can recognise a PTS EIIC type-1 domain in the interval 3 to 414 (KKLFGQLQRI…LKYKTPGRED (412 aa)). The next 10 helical transmembrane spans lie at 16–36 (LMLPVAILPAAGLLLAIGTAM), 73–93 (MIFALGVAIGLAGGDGVAAIA), 126–146 (ILGIPTLQTGVFGGIIIGALA), 170–190 (FVPIMMATTSFILAFPMALIW), 199–219 (AFSTGLLDSNTGVAVFLFGFI), 273–293 (FMQGEFPVMMFGLPAAALAIY), 303–323 (VVAGLMGSAALTSFLTGITEP), 328–348 (FLFVAPLLFFIHAVLDGLSFL), 355–375 (LHLGYTFSGGFIDYFLLGILP), and 383–403 (VIPVGLVYAVIYYFVFRFLIV). The PTS EIIB type-1 domain maps to 425–506 (TELPYAVLEA…QQIMNGQVVE (82 aa)). The Phosphocysteine intermediate; for EIIB activity role is filled by Cys-447. The 105-residue stretch at 551–655 (DQVFSEKMMG…SDITPIIVTQ (105 aa)) folds into the PTS EIIA type-1 domain. His-603 acts as the Tele-phosphohistidine intermediate; for EIIA activity in catalysis.

It localises to the cell membrane. The enzyme catalyses N(pros)-phospho-L-histidyl-[protein] + D-glucose(out) = D-glucose 6-phosphate(in) + L-histidyl-[protein]. The phosphoenolpyruvate-dependent sugar phosphotransferase system (sugar PTS), a major carbohydrate active transport system, catalyzes the phosphorylation of incoming sugar substrates concomitantly with their translocation across the cell membrane. This system is involved in glucose transport. The sequence is that of PTS system glucose-specific EIICBA component (ptsG) from Staphylococcus aureus (strain bovine RF122 / ET3-1).